The primary structure comprises 151 residues: MADDEVKPIVRIADVDLDGHKKVPYALTGIKGIGIRMAYAICRELGLDEEKKLGELSDEEIERIEEEIKKLSEGESNIPSWMYNRQKDYETGEDMHLVGAELEMTVKQDIDRLKKIRAYRGIRHELGLPVRGQRTKSSFRRGRTVGVKKKQ.

Positions 131–151 (RGQRTKSSFRRGRTVGVKKKQ) are disordered. Residues 133 to 151 (QRTKSSFRRGRTVGVKKKQ) show a composition bias toward basic residues.

Belongs to the universal ribosomal protein uS13 family. As to quaternary structure, part of the 30S ribosomal subunit. Forms a loose heterodimer with protein S19. Forms two bridges to the 50S subunit in the 70S ribosome.

Functionally, located at the top of the head of the 30S subunit, it contacts several helices of the 16S rRNA. In the 70S ribosome it contacts the 23S rRNA (bridge B1a) and protein L5 of the 50S subunit (bridge B1b), connecting the 2 subunits; these bridges are implicated in subunit movement. This is Small ribosomal subunit protein uS13 from Methanopyrus kandleri (strain AV19 / DSM 6324 / JCM 9639 / NBRC 100938).